We begin with the raw amino-acid sequence, 298 residues long: Tyrosine recombinase XerC (298 aa).

The Core-binding (CB) domain maps to 2–88; it reads TDLHTDVERY…ALRSFFDWLV (87 aa). The 180-residue stretch at 109–288 folds into the Tyr recombinase domain; the sequence is HLPKNIDVDD…DFQHLASVYD (180 aa). Catalysis depends on residues R148, K172, H240, R243, and H266. The active-site O-(3'-phospho-DNA)-tyrosine intermediate is Y275.

This sequence belongs to the 'phage' integrase family. XerC subfamily. In terms of assembly, forms a cyclic heterotetrameric complex composed of two molecules of XerC and two molecules of XerD, in which XerC interacts with XerD via its C-terminal region, XerD interacts with XerC via its C-terminal region and so on.

The protein resides in the cytoplasm. With respect to regulation, ftsK may regulate the catalytic switch between XerC and XerD in the heterotetrameric complex during the two steps of the recombination process. Functionally, site-specific tyrosine recombinase, which acts by catalyzing the cutting and rejoining of the recombining DNA molecules. Binds cooperatively to specific DNA consensus sequences that are separated from XerD binding sites by a short central region, forming the heterotetrameric XerC-XerD complex that recombines DNA substrates. The complex is essential to convert dimers of the bacterial chromosome into monomers to permit their segregation at cell division. It also contributes to the segregational stability of plasmids. In the complex XerC specifically exchanges the top DNA strands. This is Tyrosine recombinase XerC from Escherichia coli O139:H28 (strain E24377A / ETEC).